Here is a 189-residue protein sequence, read N- to C-terminus: Lipid A acyltransferase PagP (189 aa).

An N-terminal signal peptide occupies residues 1–24 (MLRRFSLFSLGFLGWLLVSGNASA). Residues His-61, Asp-104, and Ser-105 contribute to the active site.

It belongs to the lipid A palmitoyltransferase family. Homodimer.

It localises to the cell outer membrane. The catalysed reaction is a lipid A + a 1,2-diacyl-sn-glycero-3-phosphocholine = a hepta-acyl lipid A + a 2-acyl-sn-glycero-3-phosphocholine. It carries out the reaction a lipid IVA + a 1,2-diacyl-sn-glycero-3-phosphocholine = a lipid IVB + a 2-acyl-sn-glycero-3-phosphocholine. The enzyme catalyses a lipid IIA + a 1,2-diacyl-sn-glycero-3-phosphocholine = a lipid IIB + a 2-acyl-sn-glycero-3-phosphocholine. Transfers a fatty acid residue from the sn-1 position of a phospholipid to the N-linked hydroxyfatty acid chain on the proximal unit of lipid A or its precursors. This Klebsiella pneumoniae subsp. pneumoniae (strain ATCC 700721 / MGH 78578) protein is Lipid A acyltransferase PagP.